The primary structure comprises 313 residues: Ribosomal RNA small subunit methyltransferase H (313 aa).

S-adenosyl-L-methionine contacts are provided by residues 35-37 (GGY), Asp53, Phe80, Asp101, and Gln108.

This sequence belongs to the methyltransferase superfamily. RsmH family.

The protein resides in the cytoplasm. The catalysed reaction is cytidine(1402) in 16S rRNA + S-adenosyl-L-methionine = N(4)-methylcytidine(1402) in 16S rRNA + S-adenosyl-L-homocysteine + H(+). Its function is as follows. Specifically methylates the N4 position of cytidine in position 1402 (C1402) of 16S rRNA. The protein is Ribosomal RNA small subunit methyltransferase H of Acidiphilium cryptum (strain JF-5).